The primary structure comprises 263 residues: Tropinone reductase homolog At2g29300 (263 aa).

13–37 is a binding site for NADP(+); that stretch reads LVTGAASGIGYAIVEELAGFGARIH. Substrate is bound at residue S146. The active-site Proton acceptor is Y160.

This sequence belongs to the short-chain dehydrogenases/reductases (SDR) family. SDR65C subfamily.

In Arabidopsis thaliana (Mouse-ear cress), this protein is Tropinone reductase homolog At2g29300.